The sequence spans 252 residues: Small ribosomal subunit protein uS2A (252 aa).

An N-acetylserine modification is found at Ser-2. Residues 209–252 (EVEQQVAEEATTEEAGEEEAKEEVTEEQAEATEWAEENADNVEW) are disordered. Positions 218-252 (ATTEEAGEEEAKEEVTEEQAEATEWAEENADNVEW) are enriched in acidic residues.

This sequence belongs to the universal ribosomal protein uS2 family. As to quaternary structure, component of the small ribosomal subunit. Mature ribosomes consist of a small (40S) and a large (60S) subunit. The 40S subunit contains about 33 different proteins and 1 molecule of RNA (18S). The 60S subunit contains about 49 different proteins and 3 molecules of RNA (25S, 5.8S and 5S). Interacts with RPS21.

It is found in the cytoplasm. Required for the assembly and/or stability of the 40S ribosomal subunit. Required for the processing of the 20S rRNA-precursor to mature 18S rRNA in a late step of the maturation of 40S ribosomal subunits. This is Small ribosomal subunit protein uS2A from Saccharomyces cerevisiae (strain RM11-1a) (Baker's yeast).